Here is an 87-residue protein sequence, read N- to C-terminus: uncharacterized protein (87 aa).

The region spanning 4 to 87 (SKIIILNNNK…TISGSILIKI (84 aa)) is the 2Fe-2S ferredoxin-type domain. Residues C39, C44, C47, and C75 each coordinate [2Fe-2S] cluster.

It depends on [2Fe-2S] cluster as a cofactor.

This is an uncharacterized protein from Buchnera aphidicola subsp. Baizongia pistaciae (strain Bp).